The primary structure comprises 1081 residues: DNA-directed RNA polymerase subunit beta (1081 aa).

The protein belongs to the RNA polymerase beta chain family. As to quaternary structure, in plastids the minimal PEP RNA polymerase catalytic core is composed of four subunits: alpha, beta, beta', and beta''. When a (nuclear-encoded) sigma factor is associated with the core the holoenzyme is formed, which can initiate transcription.

Its subcellular location is the plastid. The protein localises to the chloroplast. It carries out the reaction RNA(n) + a ribonucleoside 5'-triphosphate = RNA(n+1) + diphosphate. Functionally, DNA-dependent RNA polymerase catalyzes the transcription of DNA into RNA using the four ribonucleoside triphosphates as substrates. This Cyanidium caldarium (Red alga) protein is DNA-directed RNA polymerase subunit beta.